We begin with the raw amino-acid sequence, 374 residues long: UDP-N-acetylglucosamine--N-acetylmuramyl-(pentapeptide) pyrophosphoryl-undecaprenol N-acetylglucosamine transferase (374 aa).

UDP-N-acetyl-alpha-D-glucosamine-binding positions include 35 to 37 (TGG), Asn144, Arg185, Ser211, and Gln305.

It belongs to the glycosyltransferase 28 family. MurG subfamily.

It localises to the cell inner membrane. It carries out the reaction di-trans,octa-cis-undecaprenyl diphospho-N-acetyl-alpha-D-muramoyl-L-alanyl-D-glutamyl-meso-2,6-diaminopimeloyl-D-alanyl-D-alanine + UDP-N-acetyl-alpha-D-glucosamine = di-trans,octa-cis-undecaprenyl diphospho-[N-acetyl-alpha-D-glucosaminyl-(1-&gt;4)]-N-acetyl-alpha-D-muramoyl-L-alanyl-D-glutamyl-meso-2,6-diaminopimeloyl-D-alanyl-D-alanine + UDP + H(+). It functions in the pathway cell wall biogenesis; peptidoglycan biosynthesis. Cell wall formation. Catalyzes the transfer of a GlcNAc subunit on undecaprenyl-pyrophosphoryl-MurNAc-pentapeptide (lipid intermediate I) to form undecaprenyl-pyrophosphoryl-MurNAc-(pentapeptide)GlcNAc (lipid intermediate II). This is UDP-N-acetylglucosamine--N-acetylmuramyl-(pentapeptide) pyrophosphoryl-undecaprenol N-acetylglucosamine transferase from Trichodesmium erythraeum (strain IMS101).